A 292-amino-acid polypeptide reads, in one-letter code: Glycine--tRNA ligase alpha subunit (292 aa).

It belongs to the class-II aminoacyl-tRNA synthetase family. In terms of assembly, tetramer of two alpha and two beta subunits.

The protein localises to the cytoplasm. It catalyses the reaction tRNA(Gly) + glycine + ATP = glycyl-tRNA(Gly) + AMP + diphosphate. In Synechococcus sp. (strain ATCC 27144 / PCC 6301 / SAUG 1402/1) (Anacystis nidulans), this protein is Glycine--tRNA ligase alpha subunit.